Consider the following 721-residue polypeptide: Polyribonucleotide nucleotidyltransferase (721 aa).

Mg(2+)-binding residues include Asp-511 and Asp-517. One can recognise a KH domain in the interval 577–637 (PSTDFFHINP…SGVQAAREHI (61 aa)). One can recognise an S1 motif domain in the interval 654–721 (GDIHKGIVKK…KGNKISLGIA (68 aa)).

The protein belongs to the polyribonucleotide nucleotidyltransferase family. Mg(2+) serves as cofactor.

The protein localises to the cytoplasm. The enzyme catalyses RNA(n+1) + phosphate = RNA(n) + a ribonucleoside 5'-diphosphate. Its function is as follows. Involved in mRNA degradation. Catalyzes the phosphorolysis of single-stranded polyribonucleotides processively in the 3'- to 5'-direction. The chain is Polyribonucleotide nucleotidyltransferase from Sulfurimonas denitrificans (strain ATCC 33889 / DSM 1251) (Thiomicrospira denitrificans (strain ATCC 33889 / DSM 1251)).